The primary structure comprises 400 residues: Phosphoglycerate kinase (400 aa).

Substrate is bound by residues D23 to N25, R38, H61 to R64, R120, and R153. Residues K203, E325, and G355 to T358 contribute to the ATP site.

This sequence belongs to the phosphoglycerate kinase family. As to quaternary structure, monomer.

Its subcellular location is the cytoplasm. The enzyme catalyses (2R)-3-phosphoglycerate + ATP = (2R)-3-phospho-glyceroyl phosphate + ADP. It participates in carbohydrate degradation; glycolysis; pyruvate from D-glyceraldehyde 3-phosphate: step 2/5. The sequence is that of Phosphoglycerate kinase from Methylorubrum extorquens (strain CM4 / NCIMB 13688) (Methylobacterium extorquens).